Consider the following 138-residue polypeptide: Small ribosomal subunit protein uS11c (138 aa).

The tract at residues M1 to I25 is disordered. Residues G9–I25 show a composition bias toward basic residues.

The protein belongs to the universal ribosomal protein uS11 family. Part of the 30S ribosomal subunit.

Its subcellular location is the plastid. It is found in the chloroplast. The polypeptide is Small ribosomal subunit protein uS11c (Eucalyptus globulus subsp. globulus (Tasmanian blue gum)).